A 750-amino-acid polypeptide reads, in one-letter code: Photosystem I P700 chlorophyll a apoprotein A1 (750 aa).

8 consecutive transmembrane segments (helical) span residues 70–93 (VFSAHFGQLSIIFLWLSGMYFHGA), 156–179 (LYCTAIGALIFAALMLFAGWFHYH), 195–219 (LNHHLAGLLGLGSLSWAGHQIHVSL), 291–309 (IAHHHLAIAILFLIAGHMY), 346–369 (WHAQLSLNLAMLGSTTIVVAHHMY), 385–411 (LSLFTHHMWIGGFLIVGAAAHAAIFMV), 433–455 (AIISHLNWVCIFLGFHSFGLYIH), and 531–549 (FLVHHIHAFTIHVTVLILL). 2 residues coordinate [4Fe-4S] cluster: cysteine 573 and cysteine 582. Helical transmembrane passes span 589–610 (HVFLGLFWMYNAISVVIFHFSW) and 664–686 (LSAYGLFFLGAHFVWAFSLMFLF). Position 675 (histidine 675) interacts with chlorophyll a'. Chlorophyll a-binding residues include methionine 683 and tyrosine 691. Tryptophan 692 is a binding site for phylloquinone. A helical membrane pass occupies residues 724–744 (AVGVTHYLLGGIATTWAFFLA).

It belongs to the PsaA/PsaB family. As to quaternary structure, the PsaA/B heterodimer binds the P700 chlorophyll special pair and subsequent electron acceptors. PSI consists of a core antenna complex that captures photons, and an electron transfer chain that converts photonic excitation into a charge separation. The eukaryotic PSI reaction center is composed of at least 11 subunits. It depends on P700 is a chlorophyll a/chlorophyll a' dimer, A0 is one or more chlorophyll a, A1 is one or both phylloquinones and FX is a shared 4Fe-4S iron-sulfur center. as a cofactor.

Its subcellular location is the plastid. The protein localises to the chloroplast thylakoid membrane. It catalyses the reaction reduced [plastocyanin] + hnu + oxidized [2Fe-2S]-[ferredoxin] = oxidized [plastocyanin] + reduced [2Fe-2S]-[ferredoxin]. Its function is as follows. PsaA and PsaB bind P700, the primary electron donor of photosystem I (PSI), as well as the electron acceptors A0, A1 and FX. PSI is a plastocyanin-ferredoxin oxidoreductase, converting photonic excitation into a charge separation, which transfers an electron from the donor P700 chlorophyll pair to the spectroscopically characterized acceptors A0, A1, FX, FA and FB in turn. Oxidized P700 is reduced on the lumenal side of the thylakoid membrane by plastocyanin. The chain is Photosystem I P700 chlorophyll a apoprotein A1 from Agrostis stolonifera (Creeping bentgrass).